Here is a 1905-residue protein sequence, read N- to C-terminus: von Willebrand factor A domain-containing protein 8 (1905 aa).

Residues 1–45 (MQSRLLLLGAPGGLGDVASRRVRLLLRQVLRGRPGGDQQRLEVRL) constitute a mitochondrion transit peptide. The interval 1-260 (MQSRLLLLGA…PLDPPLRSRF (260 aa)) is interaction with PEX7. 446-453 (GGKGCGKT) serves as a coordination point for ATP. A compositionally biased stretch (basic and acidic residues) spans 1541–1560 (ERDSNEDVSDPKHGKEDPDN). Residues 1541–1583 (ERDSNEDVSDPKHGKEDPDNMPHVGGNTWAGGTGGRDTAGLGG) are disordered. The segment covering 1568–1583 (TWAGGTGGRDTAGLGG) has biased composition (gly residues). Positions 1714 to 1896 (RLRLVVDVSG…KKIPQILQQI (183 aa)) constitute a VWFA domain.

In terms of assembly, monomer. Interacts with PEX7. Interacts with PEX5 in a PEX7-dependent manner. In terms of tissue distribution, isoform 1 is predominantly expressed in liver, kidney, pancreas, heart, and skeletal muscle (at protein level).

The protein localises to the mitochondrion. Functionally, exhibits ATPase activity in vitro. The sequence is that of von Willebrand factor A domain-containing protein 8 (Vwa8) from Mus musculus (Mouse).